Consider the following 443-residue polypeptide: Palmitoyltransferase pfa5 (443 aa).

Transmembrane regions (helical) follow at residues 17-37 (IIPP…TKPL) and 57-77 (AGAA…ATYL). The segment at 96-137 (CTQNQTGSDGSKHRHRRHRRRKSGHHLSKTTEKTDRSDGGDV) is disordered. The segment covering 107-123 (KHRHRRHRRRKSGHHLS) has biased composition (basic residues). Residues 124–137 (KTTEKTDRSDGGDV) are compositionally biased toward basic and acidic residues. The region spanning 175-225 (VYCSTCCQFKTDRAHHCREVDRCVRKMDHFCPWVGGVVSETSFKFFIQFIV) is the DHHC domain. Helical transmembrane passes span 220-240 (FIQF…VFAI) and 256-276 (WIVC…VAIS). Residues 410–443 (AGLEVSTESESADPVGAAETPQHEQRRGKHRRRN) form a disordered region.

The protein belongs to the DHHC palmitoyltransferase family. PFA5 subfamily. Autopalmitoylated.

It is found in the membrane. It carries out the reaction L-cysteinyl-[protein] + hexadecanoyl-CoA = S-hexadecanoyl-L-cysteinyl-[protein] + CoA. This is Palmitoyltransferase pfa5 (pfa5) from Aspergillus fumigatus (strain ATCC MYA-4609 / CBS 101355 / FGSC A1100 / Af293) (Neosartorya fumigata).